The sequence spans 375 residues: 4,4'-diaponeurosporenoate glycosyltransferase (375 aa).

Transmembrane regions (helical) follow at residues 3–23 (WLSRILTVIVTMSMACGALIF), 164–184 (FYEGFSAIFNLMTVVGMNVFS), 277–297 (IMTAIVLWLFGSIASILGLCL), and 330–350 (FSNLLMVCHPLLFMFFTKIFI).

The protein belongs to the glycosyltransferase 2 family. CrtQ subfamily.

The protein localises to the cell membrane. It participates in carotenoid biosynthesis; staphyloxanthin biosynthesis; staphyloxanthin from farnesyl diphosphate: step 4/5. Catalyzes the glycosylation of 4,4'-diaponeurosporenoate, i.e. the esterification of glucose at the C1'' position with the carboxyl group of 4,4'-diaponeurosporenic acid, to form glycosyl-4,4'-diaponeurosporenoate. This is a step in the biosynthesis of staphyloxanthin, an orange pigment present in most staphylococci strains. This is 4,4'-diaponeurosporenoate glycosyltransferase (crtQ) from Staphylococcus aureus (strain Mu50 / ATCC 700699).